Here is a 476-residue protein sequence, read N- to C-terminus: MMAKWMSVAQVKDKIKESSAEEVTAGYLEVIEKSKINGYITVSDKALEQAKKIDVEGHEGPLAGVPIAIKDNISVVGLPNSCGSKILEGYVPPFNAHVIEKLLDAGAVILGKTNLDEFAMGSSTETSYYGPTANPWDLERVPGGSSGGSAAVVAAGEAPFALGSDTGGSVRCPAAFCGVVGLKPTYGAVSRYGVVAYANSLEQVGPLANNVEDIAILMDVIAGYDRRDSTSIDSKTEYQKALVDDVKGLKIGVPKEFFGEGIHPGVEKAVWNAIHKFESLGATRQEVSMPNINYALASYYIIAMSEASSNLARFDGTRYGFRANGENWHAMVSKTRAEGFGTEVKRRILLGTYALSAGYHDKYYLKALKVRTLVKQDFDKALSTVDLLMAPTMPNPAFRIGEKIEDPLTLYLSDVNTCPINLAGVPSVSVPCGFTDGLPVGLQIMGKPFDEPTVLRAAYTFEKNTDYHTKRPPEVA.

Catalysis depends on charge relay system residues Lys70 and Ser145. The active-site Acyl-ester intermediate is Ser169.

The protein belongs to the amidase family. GatA subfamily. Heterotrimer of A, B and C subunits.

It catalyses the reaction L-glutamyl-tRNA(Gln) + L-glutamine + ATP + H2O = L-glutaminyl-tRNA(Gln) + L-glutamate + ADP + phosphate + H(+). Functionally, allows the formation of correctly charged Gln-tRNA(Gln) through the transamidation of misacylated Glu-tRNA(Gln) in organisms which lack glutaminyl-tRNA synthetase. The reaction takes place in the presence of glutamine and ATP through an activated gamma-phospho-Glu-tRNA(Gln). The protein is Glutamyl-tRNA(Gln) amidotransferase subunit A of Methanosarcina acetivorans (strain ATCC 35395 / DSM 2834 / JCM 12185 / C2A).